A 252-amino-acid polypeptide reads, in one-letter code: MNKFEDIRGVAFDLDGTLVDSAPGLAAAVDMALYALELPIAGEERVITWIGNGADVLMERALTWARQERATQRKTMGKPPVDDDIPAEEQVRILRKLFDRYYGEVAEEGTFLFPHVADTLGALQAKGLPLGLVTNKPTPFVAPLLEALDIAKYFSVVIGGDDVQNKKPHPDPLLLVAERMGIAPQQMLFVGDSRNDIQAAKAAGCPSVGLTYGYNYGEAIDLSQPDVIYQSINDLLPALGLPHSENQESKND.

The active-site Nucleophile is Asp-13. The Mg(2+) site is built by Asp-13, Asp-15, and Asp-192.

Belongs to the HAD-like hydrolase superfamily. CbbY/CbbZ/Gph/YieH family. Monomer. It depends on Mg(2+) as a cofactor. Chloride serves as cofactor.

The enzyme catalyses 2-phosphoglycolate + H2O = glycolate + phosphate. Its pathway is organic acid metabolism; glycolate biosynthesis; glycolate from 2-phosphoglycolate: step 1/1. Functionally, specifically catalyzes the dephosphorylation of 2-phosphoglycolate. Is involved in the dissimilation of the intracellular 2-phosphoglycolate formed during the DNA repair of 3'-phosphoglycolate ends, a major class of DNA lesions induced by oxidative stress. In Shigella sonnei (strain Ss046), this protein is Phosphoglycolate phosphatase.